A 464-amino-acid polypeptide reads, in one-letter code: UDP-N-acetylmuramoylalanine--D-glutamate ligase (464 aa).

Position 127–133 (127–133 (GSNGKST)) interacts with ATP.

The protein belongs to the MurCDEF family.

Its subcellular location is the cytoplasm. It carries out the reaction UDP-N-acetyl-alpha-D-muramoyl-L-alanine + D-glutamate + ATP = UDP-N-acetyl-alpha-D-muramoyl-L-alanyl-D-glutamate + ADP + phosphate + H(+). Its pathway is cell wall biogenesis; peptidoglycan biosynthesis. In terms of biological role, cell wall formation. Catalyzes the addition of glutamate to the nucleotide precursor UDP-N-acetylmuramoyl-L-alanine (UMA). This Dinoroseobacter shibae (strain DSM 16493 / NCIMB 14021 / DFL 12) protein is UDP-N-acetylmuramoylalanine--D-glutamate ligase.